The sequence spans 504 residues: MVAPGSVTSRLGSVFPFLLVLVDLQYEGAECGVNADVEKHLELGKKLLAAGQLADALSQFHAAVDGDPDNYIAYYRRATVFLAMGKSKAALPDLTKVIELKMDFTAARLQRGHLLLKQGKLDEAEDDFKKVLKSNPSENEEKEAQSQLVKSDEMQRLRSQALDAFESSDFTAAITFLDKILEVCVWDAELRELRAECFIKEGEPRKAISDLKASSKLKNDNTEAFYKISTLYYELGDHELSLSEVRECLKLDQDHKRCFAHYKQVKKLNKLIESAEELIKEGRYTDAISKYESVMKTEPGVHEYTIRSKERICHCFSKDEKPVEAIRVCSEVLQVEPDNVNALKDRAEAYLIEEMYDEAIQDYETAQEHNENDQQIREGLEKAQRLLKQSQRRDYYKILGVKRNAKKQEIIKAYRKLALQWHPDNFQNEEEKKKAEKKFIDIAAAKEVLSDPEMRKKFDDGEDPLDAESQQGGGGNPFHRSWNSWQGFSPFSSGGPFRFKFHFN.

The first 31 residues, 1 to 31 (MVAPGSVTSRLGSVFPFLLVLVDLQYEGAEC), serve as a signal peptide directing secretion. TPR repeat units lie at residues 37–70 (VEKHLELGKKLLAAGQLADALSQFHAAVDGDPDN), 72–104 (IAYYRRATVFLAMGKSKAALPDLTKVIELKMDF), 105–138 (TAARLQRGHLLLKQGKLDEAEDDFKKVLKSNPSE), 154–187 (MQRLRSQALDAFESSDFTAAITFLDKILEVCVWD), 189–221 (ELRELRAECFIKEGEPRKAISDLKASSKLKNDN), 222–255 (TEAFYKISTLYYELGDHELSLSEVRECLKLDQDH), 268–301 (LNKLIESAEELIKEGRYTDAISKYESVMKTEPGV), 306–339 (IRSKERICHCFSKDEKPVEAIRVCSEVLQVEPDN), and 340–373 (VNALKDRAEAYLIEEMYDEAIQDYETAQEHNEND). An intrachain disulfide couples C248 to C258. S274 bears the Phosphoserine mark. C313 and C329 are oxidised to a cystine. The flexible linker stretch occupies residues 375-393 (QIREGLEKAQRLLKQSQRR). A J domain is found at 394–462 (DYYKILGVKR…EMRKKFDDGE (69 aa)). Residues 451–481 (DPEMRKKFDDGEDPLDAESQQGGGGNPFHRS) form a disordered region.

In terms of assembly, interacts with EIF2AK4/GCN2; this interaction occurs under endoplasmic reticulum (ER) stress, hypothermic and amino acid starving stress conditions and inhibits EIF2AK4/GCN2 kinase activity. Interacts with EIF2AK3. Interacts with EIF2AK2. Forms a trimeric complex with DNAJB1 and HSPA8. Interacts with THAP12.

The protein resides in the endoplasmic reticulum. Its function is as follows. Involved in the unfolded protein response (UPR) during endoplasmic reticulum (ER) stress. Acts as a negative regulator of the EIF2AK4/GCN2 kinase activity by preventing the phosphorylation of eIF-2-alpha at 'Ser-52' and hence attenuating general protein synthesis under ER stress, hypothermic and amino acid starving stress conditions. Co-chaperone of HSPA8/HSC70, it stimulates its ATPase activity. May inhibit both the autophosphorylation of EIF2AK2/PKR and the ability of EIF2AK2 to catalyze phosphorylation of the EIF2A. May inhibit EIF2AK3/PERK activity. The chain is DnaJ homolog subfamily C member 3 (DNAJC3) from Bos taurus (Bovine).